The chain runs to 107 residues: Putative double-stranded DNA mimic protein Asuc_1259 (107 aa).

Belongs to the putative dsDNA mimic protein family.

In terms of biological role, may act as a double-stranded DNA (dsDNA) mimic. Probably regulates the activity of a dsDNA-binding protein. This Actinobacillus succinogenes (strain ATCC 55618 / DSM 22257 / CCUG 43843 / 130Z) protein is Putative double-stranded DNA mimic protein Asuc_1259.